The sequence spans 275 residues: Dermonecrotic toxin SpeSicTox-betaIIA2v (275 aa).

Residue His5 is part of the active site. Mg(2+) contacts are provided by Glu25 and Asp27. Catalysis depends on His41, which acts as the Nucleophile. 2 cysteine pairs are disulfide-bonded: Cys45-Cys51 and Cys47-Cys190. Asp85 is a Mg(2+) binding site.

Belongs to the arthropod phospholipase D family. Class II subfamily. Mg(2+) serves as cofactor. Expressed by the venom gland.

It is found in the secreted. The enzyme catalyses an N-(acyl)-sphingosylphosphocholine = an N-(acyl)-sphingosyl-1,3-cyclic phosphate + choline. It carries out the reaction an N-(acyl)-sphingosylphosphoethanolamine = an N-(acyl)-sphingosyl-1,3-cyclic phosphate + ethanolamine. It catalyses the reaction a 1-acyl-sn-glycero-3-phosphocholine = a 1-acyl-sn-glycero-2,3-cyclic phosphate + choline. The catalysed reaction is a 1-acyl-sn-glycero-3-phosphoethanolamine = a 1-acyl-sn-glycero-2,3-cyclic phosphate + ethanolamine. Its function is as follows. Dermonecrotic toxins cleave the phosphodiester linkage between the phosphate and headgroup of certain phospholipids (sphingolipid and lysolipid substrates), forming an alcohol (often choline) and a cyclic phosphate. This toxin acts on sphingomyelin (SM). It may also act on ceramide phosphoethanolamine (CPE), lysophosphatidylcholine (LPC) and lysophosphatidylethanolamine (LPE), but not on lysophosphatidylserine (LPS), and lysophosphatidylglycerol (LPG). It acts by transphosphatidylation, releasing exclusively cyclic phosphate products as second products. Induces dermonecrosis, hemolysis, increased vascular permeability, edema, inflammatory response, and platelet aggregation. This Sicarius peruensis (Six-eyed sand spider) protein is Dermonecrotic toxin SpeSicTox-betaIIA2v.